Reading from the N-terminus, the 308-residue chain is Protein translocase subunit SecF (308 aa).

Helical transmembrane passes span 14–34 (FFLL…LFGF), 134–154 (VYAV…RFEF), 158–178 (ISGI…FALL), 185–205 (TFVA…IVIF), 238–258 (SIRT…FGGI), and 267–287 (LIIG…PIWV).

It belongs to the SecD/SecF family. SecF subfamily. Forms a complex with SecD. Part of the essential Sec protein translocation apparatus which comprises SecA, SecYEG and auxiliary proteins SecDF. Other proteins may also be involved.

It is found in the cell membrane. Its function is as follows. Part of the Sec protein translocase complex. Interacts with the SecYEG preprotein conducting channel. SecDF uses the proton motive force (PMF) to complete protein translocation after the ATP-dependent function of SecA. This chain is Protein translocase subunit SecF, found in Alicyclobacillus acidocaldarius subsp. acidocaldarius (strain ATCC 27009 / DSM 446 / BCRC 14685 / JCM 5260 / KCTC 1825 / NBRC 15652 / NCIMB 11725 / NRRL B-14509 / 104-IA) (Bacillus acidocaldarius).